An 859-amino-acid chain; its full sequence is Nitrate reductase [NADPH] (859 aa).

Position 137 (cysteine 137) interacts with Mo-molybdopterin. In terms of domain architecture, Cytochrome b5 heme-binding spans 502-578; the sequence is DVVIKYSEFE…LPSMHLGRLE (77 aa). Heme is bound by residues histidine 538 and histidine 561. The region spanning 602 to 713 is the FAD-binding FR-type domain; that stretch reads RKWHKITLAE…KGPVGEFEYV (112 aa). Residues 655–658, 672–676, phenylalanine 677, 687–689, serine 737, and threonine 740 each bind FAD; these read RAYT, LIKVY, and IMT. 829–838 serves as a coordination point for NADP(+); it reads MLLVCGPPGM.

This sequence belongs to the nitrate reductase family. In terms of assembly, homodimer. The cofactor is FAD. Heme is required as a cofactor. Mo-molybdopterin serves as cofactor.

It carries out the reaction nitrite + NADP(+) + H2O = nitrate + NADPH + H(+). Functionally, nitrate reductase is a key enzyme involved in the first step of nitrate assimilation in plants, fungi and bacteria. This chain is Nitrate reductase [NADPH] (YNR1), found in Pichia angusta (Yeast).